Here is a 439-residue protein sequence, read N- to C-terminus: Xylose isomerase (439 aa).

Active-site residues include H99 and D102. 7 residues coordinate Mg(2+): E230, E266, H269, D294, D305, D307, and D337.

This sequence belongs to the xylose isomerase family. Homotetramer. It depends on Mg(2+) as a cofactor.

It is found in the cytoplasm. The enzyme catalyses alpha-D-xylose = alpha-D-xylulofuranose. This Shouchella clausii (strain KSM-K16) (Alkalihalobacillus clausii) protein is Xylose isomerase.